The primary structure comprises 363 residues: MHRSESSYCREETTLCQGVNSTWVPPADTVPEVSLIPSSPPAPDSPAPSPKPGYGFSTCEEKHGDPRIRRPMNAFMVWAKDERKRLAQQNPDLHNAVLSKMLGQSWKNLTSVEKRPFVEEAERLRVQHLQDHPNYKYRPRRKKQAKKLKRMDPSPLLRNEGFTRGQPMVNLSHFRNLHPLGGSGELESYGLPTPEMSPLDVLEPSEPAFFPPHMREDTDPVPFRTYQHGMDFSQEKTMREISLPYSSSPSHMGSFLRTPTPSAFYYKAHGGSPVCTPLGQLSPPPEAPALDAMDHLNQAELWGDFDRNEFDQYLNMSRTQRPGYSFPMSKLGAPRTIPCEENSLISALSDASTAMYYTPCITG.

Residues 20–66 are disordered; sequence NSTWVPPADTVPEVSLIPSSPPAPDSPAPSPKPGYGFSTCEEKHGDP. Over residues 38–51 the composition is skewed to pro residues; it reads SSPPAPDSPAPSPK. Positions 68–136 form a DNA-binding region, HMG box; sequence IRRPMNAFMV…QHLQDHPNYK (69 aa). 2 interaction with DNA regions span residues 70-83 and 94-106; these read RPMN…KDER and HNAV…GQSW. The tract at residues 129 to 163 is disordered; the sequence is LQDHPNYKYRPRRKKQAKKLKRMDPSPLLRNEGFT. Over residues 135 to 149 the composition is skewed to basic residues; the sequence is YKYRPRRKKQAKKLK. Residues 149-210 form an important for transcriptional activation region; sequence KRMDPSPLLR…VLEPSEPAFF (62 aa). In terms of domain architecture, Sox C-terminal spans 236–362; sequence KTMREISLPY…TAMYYTPCIT (127 aa). The short motif at 308-316 is the 9aaTAD element; it reads NEFDQYLNM.

Expressed in the adult spleen, lung, heart and kidney, and at a lower level in the adult testis, liver and brain.

It is found in the nucleus. Probable transcription factor. Binds to the consensus DNA sequence 5'-AACAAT-3'. Also binds 5'-CACAAT-3' and 5'-AATAAT-3' with similar affinity. This chain is Transcription factor Sox-18A (sox18-a), found in Xenopus laevis (African clawed frog).